Here is a 551-residue protein sequence, read N- to C-terminus: Colicin E3 (551 aa).

Disordered regions lie at residues 1-74 (MSGG…SGGG), 243-269 (TLSPGVTNNTDKDVRPAGFTQGGNTRD), and 293-320 (PDQVKQRQDEENRRQQEWDATHPVEAAE). The tract at residues 1-315 (MSGGDGRGHN…RQQEWDATHP (315 aa)) is translocation (T) domain. The segment covering 20 to 35 (INGGPTGLGVGGGASD) has biased composition (gly residues). The short motif at 35-39 (DGSGW) is the Binds to TolB element. The span at 36–45 (GSGWSSENNP) shows a compositional bias: low complexity. Over residues 46-74 (WGGGSGSGIHWGGGSGHGNGGGNGNSGGG) the composition is skewed to gly residues. Over residues 296–320 (VKQRQDEENRRQQEWDATHPVEAAE) the composition is skewed to basic and acidic residues. Positions 316–378 (VEAAERNYER…IAEIKQFNRF (63 aa)) form a coiled coil. Residues 316 to 450 (VEAAERNYER…SAENNLNDEK (135 aa)) are receptor-binding (R) domain. The short motif at 379–385 (AHDPMAG) is the Hairpin element. Residues 386 to 450 (GHRMWQMAGL…SAENNLNDEK (65 aa)) are a coiled coil. The tract at residues 406 to 505 (NKQAAFDAAA…KRWTGDKGRK (100 aa)) is disordered. Residues 430–472 (ESRKKKEDKKRSAENNLNDEKNKPRKGFKDYGHDYHPAPKTEN) are compositionally biased toward basic and acidic residues. The tract at residues 451–456 (NKPRKG) is linker. Residues 455–551 (KGFKDYGHDY…DPKRNIKKYL (97 aa)) are ribosome inactivating activity. The segment at 457–551 (FKDYGHDYHP…DPKRNIKKYL (95 aa)) is cytotoxic RNase (C) domain. The Proton donor role is filled by His513. The Proton acceptor role is filled by Glu517. Residues 517–551 (EGYRASDGQHLGSFDPKTGNQLKGPDPKRNIKKYL) are disordered. The binding of immunity protein stretch occupies residues 530–551 (FDPKTGNQLKGPDPKRNIKKYL). Arg545 is a catalytic residue.

The protein belongs to the cloacin colicin family. As to quaternary structure, native colicin E3 is a 1:1 complex of A chain and protein B (cognate immunity protein, Im3); protein A is 1,000-fold more active in inactivating ribosomes than the native complex. The cytotoxic fragment (residues 456-551, C95) forms a 1:1 complex with Im3. The receptor-binding (R) domain binds obliquely to its receptor BtuB without displacing BtuB's central plug; binding unfolds the R domain. The N-terminal 83 residues (T83) bind OmpF; trimeric complexes with colicin E3, BtuB and OmpF can be cross-linked and immunoprecipitated. Probably inserts into the OmpF pore as an unfolded peptide and spans the OmpF pore. In a complex with T.thermophilus 70S ribosomes, cytotoxic fragment C96 contacts 16S rRNA, 23S rRNA, mRNA, P-site tRNA and ribosomal protein uS12.

It is found in the secreted. Colicins are polypeptide toxins produced by and active against E.coli and closely related bacteria. Cleaves 16S rRNA between adenosine-1492 and guanosine-1493 (E.coli 16S rRNA numbering), releasing a 49 nucleotide (nt) 'colicin' fragment. Inactivates 70S ribosomes or 30S subunits by endonucleolytically cleaving 16S RNA at a specific site about 50 nt from its C-terminus. Produces 5'-OH-guanosine and a 2',3'-cyclic phosphate adenosine. Mixing a susceptible (e.g. strain K12 / A19) and colicin E3 producing strain results in total protein translation inhibition within 11 minutes. Its activity is inhibited by cognate immunity protein Im3. In terms of biological role, uses BtuB, the vitamin B transporter, as a receptor on the outer membrane; binds via the receptor (R) domain. Then the translocation domain (T) probably 'fishes' for its outer membrane translocon protein, OmpF. The N-terminal 83 residues (T83) can bind to and occlude OmpF channels. A complex of the cytotoxic C-terminal 96 residues (C96) plus the immunity protein does not occlude OmpF; upon complex separation from the immunity protein C96 becomes disordered and is able to bind OmpF. The N-terminus probably binds TolB and then reinserts into an empty pore of trimeric OmpF; the rest of the protein is pulled through OmpF and crosses the inner membrane, where the cytotoxic fragment is probably released by protease FtsH. The sequence is that of Colicin E3 (ceaC) from Escherichia coli.